A 105-amino-acid polypeptide reads, in one-letter code: uncharacterized protein (105 aa).

The Hcy-binding domain occupies 1–101 (MMDLGDKINP…KDIQEISAAV (101 aa)).

This is an uncharacterized protein from Saccharomyces cerevisiae (strain ATCC 204508 / S288c) (Baker's yeast).